The sequence spans 236 residues: tRNA (guanine-N(7)-)-methyltransferase (236 aa).

Residues Gly54, 77–78 (EI), 110–111 (NA), and Leu130 each bind S-adenosyl-L-methionine. Residue Asp133 is part of the active site. 208–210 (TEE) lines the S-adenosyl-L-methionine pocket.

It belongs to the class I-like SAM-binding methyltransferase superfamily. TrmB family.

The protein resides in the nucleus. It carries out the reaction guanosine(46) in tRNA + S-adenosyl-L-methionine = N(7)-methylguanosine(46) in tRNA + S-adenosyl-L-homocysteine. It functions in the pathway tRNA modification; N(7)-methylguanine-tRNA biosynthesis. Its function is as follows. Catalyzes the formation of N(7)-methylguanine at position 46 (m7G46) in tRNA. The protein is tRNA (guanine-N(7)-)-methyltransferase of Bombyx mori (Silk moth).